The chain runs to 208 residues: Interferon epsilon (208 aa).

Residues 1–21 (MIIKHFFGTVLVLLASTTIFS) form the signal peptide. A disulfide bond links Cys-53 and Cys-163. Residues Asn-95 and Asn-104 are each glycosylated (N-linked (GlcNAc...) asparagine).

Belongs to the alpha/beta interferon family. Endometrium-specific.

The protein localises to the secreted. In terms of biological role, type I interferon required for maintaining basal levels of IFN-regulated genes, including 2'-5'-oligoadenylate synthetase, IRF7 and ISG15, in the female reproductive tract. Directly mediates protection against viral and bacterial genital infections. The protein is Interferon epsilon (IFNE) of Homo sapiens (Human).